A 446-amino-acid chain; its full sequence is MNAVEQAMEYIKTNNVKFIRFQFVDIHGEPKNIAYPVKAGAAGEEELYDVLEKGVYFDGSSIEGFVSIESSDMMLKPDLKTLSVLPWRPTEKSVARVICDVYTTNGKPFEGDPRGCLKRVLAKFDEELGGEFFVGPEPEFFILKEDACGSWVPADDAGYFDLEPLDGGCDIRRKIVFALENLGFHVEASHHEVAEGQHEVDFKFADAVKTADSVVTFKTTIKTLAAQDGLKATFMPKPFFGINGSGMHCHQSIWLNGEPSFYDESAQYQLSETCMSYVAGILDHAKSIVAVTNPTVNSYKRLVPGYEAPVNIAWANSNRSAIVRVPAPRGKGTRIEFRAPDPACNPYLAFTVMLAAGLDGVKRKLSAIEPVEKNIFAMSEAQKKAEGIESVPANLKAALDELENNSVLKDALGKHIFENFIEIKNAEWDSFRTAVTDWETKQYLKI.

One can recognise a GS beta-grasp domain in the interval 14–106 (NNVKFIRFQF…VICDVYTTNG (93 aa)). The GS catalytic domain occupies 113 to 446 (PRGCLKRVLA…DWETKQYLKI (334 aa)). Mg(2+)-binding residues include glutamate 137 and glutamate 139. Glutamate 187 provides a ligand contact to ATP. Mg(2+) is bound by residues glutamate 192 and glutamate 199. L-glutamate is bound by residues 243-244 (NG) and glycine 244. Residue histidine 248 coordinates Mg(2+). Residues 250 to 252 (HQS) and serine 252 contribute to the ATP site. Residues arginine 301, glutamate 307, and arginine 319 each coordinate L-glutamate. ATP-binding residues include arginine 319, arginine 324, and lysine 331. Glutamate 336 is a Mg(2+) binding site. Position 338 (arginine 338) interacts with L-glutamate.

It belongs to the glutamine synthetase family. Oligomer of 12 subunits arranged in the form of two hexagons. Mg(2+) is required as a cofactor.

The protein resides in the cytoplasm. The enzyme catalyses L-glutamate + NH4(+) + ATP = L-glutamine + ADP + phosphate + H(+). Functionally, probably involved in nitrogen metabolism via ammonium assimilation. Catalyzes the ATP-dependent biosynthesis of glutamine from glutamate and ammonia. In Methanococcus maripaludis (strain DSM 14266 / JCM 13030 / NBRC 101832 / S2 / LL), this protein is Glutamine synthetase.